We begin with the raw amino-acid sequence, 914 residues long: Solute carrier family 12 member 9 (914 aa).

Topologically, residues 1-36 are cytoplasmic; sequence MASESSPLLAYRLLGEEGAAFPPNGAGVSGVPSSRK. At Ser6 the chain carries Phosphoserine. The chain crosses the membrane as a helical span at residues 37-57; the sequence is LSTFLGVVVPTVLSMFSIVVF. Residues 58-72 lie on the Extracellular side of the membrane; that stretch reads LRIGFVVGHAGLLQA. Residues 73–93 traverse the membrane as a helical segment; the sequence is LAMLLVAYIILALTVLSVCAI. Over 94 to 119 the chain is Cytoplasmic; the sequence is ATNGAVRGGGAYFMISRTLGPEVGGS. The chain crosses the membrane as a helical span at residues 120 to 140; the sequence is IGLMFYLANVCGCAVSLLGLV. Residues 141 to 167 are Extracellular-facing; that stretch reads ESILDVFGADATGSSGIQVLPQGYGWN. Residues 168–188 traverse the membrane as a helical segment; sequence LLYGSLLLGLVGGVCTLGAGL. The Cytoplasmic segment spans residues 189 to 193; sequence YARAS. A helical transmembrane segment spans residues 194 to 214; the sequence is FLTFLLVSGSLASVLVSFVAV. The Extracellular portion of the chain corresponds to 215–262; the sequence is GPRNIPLAPRPGTNASSVPHRHGHFTGFNGSTLRDNLGAGYAEDYTTG. N-linked (GlcNAc...) asparagine glycosylation is found at Asn228 and Asn243. The chain crosses the membrane as a helical span at residues 263–283; sequence AMMTFASVFAVLFNGCTGIMA. Topologically, residues 284–297 are cytoplasmic; that stretch reads GANMSGELKDPSRA. A helical transmembrane segment spans residues 298 to 318; that stretch reads IPLGTIIAVAYTFFIYILLFF. Topologically, residues 319–338 are extracellular; it reads LSSFTCDRALLQEDYGFFRD. A helical membrane pass occupies residues 339-359; that stretch reads ISLWPPLVLIGIYATALSASM. At 360-376 the chain is on the cytoplasmic side; it reads SSLIGASRILHALAQDD. The helical transmembrane segment at 377-399 threads the bilayer; sequence LFGVILAPAKVVSGGGNPWGAVL. Residues 400 to 416 lie on the Extracellular side of the membrane; it reads YSWGLVQLVLLAGKLNT. The chain crosses the membrane as a helical span at residues 417-437; sequence LAAVVTVFYLVAYAAVDLSCL. Residues 438–466 lie on the Cytoplasmic side of the membrane; that stretch reads SLEWASAPNFRPTFSLFSWHTCLLGVASC. A helical transmembrane segment spans residues 467–487; sequence LLMMFLISPGAAGGSLLLMGL. Residues 488–740 are Extracellular-facing; that stretch reads LSALLTARGG…LLRPRGGPGY (253 aa). The segment at 645–678 is disordered; that stretch reads PAFSEPAEGTREGGSPALSTLFPPPRAPGSPRAL. Residues 741-761 form a helical membrane-spanning segment; that stretch reads VDVCGLFLLQMATILSMVPAW. Residues 762-914 lie on the Cytoplasmic side of the membrane; the sequence is HSARLRIFLC…GVTPVTCTDL (153 aa). Positions 844 to 864 are disordered; the sequence is QGRGTVGGPGGPEGRDGEEGP.

This sequence belongs to the SLC12A transporter family. Interacts with SLC12A1.

It is found in the cell membrane. The protein resides in the lysosome membrane. Functionally, may be an inhibitor of SLC12A1. Seems to correspond to a subunit of a multimeric transport system and thus, additional subunits may be required for its function. May play a role in lysosomal ion flux and osmoregulation. This chain is Solute carrier family 12 member 9 (Slc12a9), found in Mus musculus (Mouse).